The chain runs to 262 residues: Protein BcsX (262 aa).

It participates in glycan metabolism; bacterial cellulose biosynthesis. The polypeptide is Protein BcsX (bcsX) (Komagataeibacter xylinus (Gluconacetobacter xylinus)).